Consider the following 360-residue polypeptide: Phospho-N-acetylmuramoyl-pentapeptide-transferase (360 aa).

A run of 10 helical transmembrane segments spans residues 25–45 (RGIL…PWMI), 73–93 (TMGG…WADL), 97–117 (YVWV…VDDY), 142–162 (IGAA…TLIV), 167–187 (SVEI…IVGS), 199–219 (GLAI…CYLS), 236–256 (AGEL…FLWF), 263–283 (VFMG…IAVI), 288–308 (IVLF…MIQV), and 338–358 (VIVR…ATLK).

This sequence belongs to the glycosyltransferase 4 family. MraY subfamily. Requires Mg(2+) as cofactor.

The protein localises to the cell inner membrane. It catalyses the reaction UDP-N-acetyl-alpha-D-muramoyl-L-alanyl-gamma-D-glutamyl-meso-2,6-diaminopimeloyl-D-alanyl-D-alanine + di-trans,octa-cis-undecaprenyl phosphate = di-trans,octa-cis-undecaprenyl diphospho-N-acetyl-alpha-D-muramoyl-L-alanyl-D-glutamyl-meso-2,6-diaminopimeloyl-D-alanyl-D-alanine + UMP. Its pathway is cell wall biogenesis; peptidoglycan biosynthesis. Its function is as follows. Catalyzes the initial step of the lipid cycle reactions in the biosynthesis of the cell wall peptidoglycan: transfers peptidoglycan precursor phospho-MurNAc-pentapeptide from UDP-MurNAc-pentapeptide onto the lipid carrier undecaprenyl phosphate, yielding undecaprenyl-pyrophosphoryl-MurNAc-pentapeptide, known as lipid I. This chain is Phospho-N-acetylmuramoyl-pentapeptide-transferase, found in Pseudomonas aeruginosa (strain LESB58).